The following is a 114-amino-acid chain: MNHPTRLPLDFTEAAARKFKELIANEHNSNKKLRVYVEGGGCNGFKYMFTLDDKVNEGDLAINKQGVSLVVDPLSLGYLIGGIVDYVESIEYSRFIVKNLNAKTTCGCGSSFSV.

Iron-sulfur cluster is bound by residues Cys-42, Cys-106, and Cys-108.

It belongs to the HesB/IscA family. As to quaternary structure, homodimer. Iron-sulfur cluster is required as a cofactor.

Functionally, required for insertion of 4Fe-4S clusters for at least IspG. The sequence is that of Iron-sulfur cluster insertion protein ErpA from Hamiltonella defensa subsp. Acyrthosiphon pisum (strain 5AT).